A 668-amino-acid polypeptide reads, in one-letter code: DNA ligase (668 aa).

Residues 31 to 35 (DAEYD), 80 to 81 (SL), and Glu112 each bind NAD(+). Lys114 serves as the catalytic N6-AMP-lysine intermediate. Residues Arg135, Glu172, Lys289, and Lys313 each coordinate NAD(+). The Zn(2+) site is built by Cys407, Cys410, Cys425, and Cys431. The 78-residue stretch at 591–668 (SVPQPLAGKV…NEEQLIELLN (78 aa)) folds into the BRCT domain.

Belongs to the NAD-dependent DNA ligase family. LigA subfamily. Requires Mg(2+) as cofactor. Mn(2+) is required as a cofactor.

The enzyme catalyses NAD(+) + (deoxyribonucleotide)n-3'-hydroxyl + 5'-phospho-(deoxyribonucleotide)m = (deoxyribonucleotide)n+m + AMP + beta-nicotinamide D-nucleotide.. Its function is as follows. DNA ligase that catalyzes the formation of phosphodiester linkages between 5'-phosphoryl and 3'-hydroxyl groups in double-stranded DNA using NAD as a coenzyme and as the energy source for the reaction. It is essential for DNA replication and repair of damaged DNA. In Aliivibrio fischeri (strain MJ11) (Vibrio fischeri), this protein is DNA ligase.